The primary structure comprises 386 residues: TRIBOA-glucoside O-methyltransferase BX7 (386 aa).

Gly-224, Asp-248, Met-270, and Lys-283 together coordinate S-adenosyl-L-methionine. His-287 acts as the Proton acceptor in catalysis.

It belongs to the class I-like SAM-binding methyltransferase superfamily. Cation-independent O-methyltransferase family. COMT subfamily. As to expression, expressed in seedlings and newly formed crown roots. Highest expression in the scutellar node. Low to non detectable levels in cob, tassel and mature organs like husk or leaves.

The catalysed reaction is TRIBOA beta-D-glucoside + S-adenosyl-L-methionine = DIMBOA beta-D-glucoside + S-adenosyl-L-homocysteine + H(+). O-methyltransferase involved in the benzoxazinoid glucoside biosynthesis. Can use 2,4,7-trihydroxy-2H-1,4-benzoxazin-3(4H)-one 2-D-glucoside (TRIBOA-glucoside) as substrate, but not aglucone TRIBOA, caffeic acid, ferulic acid, apigenin or quercetin. In Zea mays (Maize), this protein is TRIBOA-glucoside O-methyltransferase BX7 (BX7).